Reading from the N-terminus, the 251-residue chain is Flagellar brake protein YcgR (251 aa).

Residues 127-239 (QRRDGFRVRP…ASRTLQRYID (113 aa)) form the PilZ domain.

It belongs to the YcgR family. In terms of assembly, monomer. Interacts with the flagellar basal bodies.

It localises to the bacterial flagellum basal body. Its function is as follows. Acts as a flagellar brake, regulating swimming and swarming in a bis-(3'-5') cyclic diguanylic acid (c-di-GMP)-dependent manner. Binds 1 c-di-GMP dimer per subunit. Increasing levels of c-di-GMP lead to decreased motility. This chain is Flagellar brake protein YcgR, found in Leptothrix cholodnii (strain ATCC 51168 / LMG 8142 / SP-6) (Leptothrix discophora (strain SP-6)).